We begin with the raw amino-acid sequence, 166 residues long: Transcription antitermination protein NusB (166 aa).

Basic and acidic residues predominate over residues M1–D18. Positions M1 to E30 are disordered.

The protein belongs to the NusB family.

Functionally, involved in transcription antitermination. Required for transcription of ribosomal RNA (rRNA) genes. Binds specifically to the boxA antiterminator sequence of the ribosomal RNA (rrn) operons. The sequence is that of Transcription antitermination protein NusB from Pseudomonas fluorescens (strain Pf0-1).